The chain runs to 356 residues: 3-isopropylmalate dehydrogenase (356 aa).

Substrate-binding residues include arginine 95, arginine 105, arginine 133, and aspartate 223. 3 residues coordinate Mg(2+): aspartate 223, aspartate 247, and aspartate 251. 281–293 (GSAPDIAGQNKAN) provides a ligand contact to NAD(+).

This sequence belongs to the isocitrate and isopropylmalate dehydrogenases family. LeuB type 1 subfamily. In terms of assembly, homodimer. It depends on Mg(2+) as a cofactor. Mn(2+) is required as a cofactor.

It localises to the cytoplasm. It carries out the reaction (2R,3S)-3-isopropylmalate + NAD(+) = 4-methyl-2-oxopentanoate + CO2 + NADH. It functions in the pathway amino-acid biosynthesis; L-leucine biosynthesis; L-leucine from 3-methyl-2-oxobutanoate: step 3/4. In terms of biological role, catalyzes the oxidation of 3-carboxy-2-hydroxy-4-methylpentanoate (3-isopropylmalate) to 3-carboxy-4-methyl-2-oxopentanoate. The product decarboxylates to 4-methyl-2 oxopentanoate. The chain is 3-isopropylmalate dehydrogenase from Neisseria gonorrhoeae (strain ATCC 700825 / FA 1090).